The following is a 360-amino-acid chain: Type II methyltransferase M2.ScrFI (360 aa).

Positions 2–360 constitute an SAM-dependent MTase C5-type domain; the sequence is LRVFEAFAGY…SLFKELFKSQ (359 aa). Cysteine 127 is a catalytic residue.

Belongs to the class I-like SAM-binding methyltransferase superfamily. C5-methyltransferase family.

The enzyme catalyses a 2'-deoxycytidine in DNA + S-adenosyl-L-methionine = a 5-methyl-2'-deoxycytidine in DNA + S-adenosyl-L-homocysteine + H(+). Its function is as follows. A methylase, recognizes the double-stranded sequence 5'-CCNGG-3', methylates C-2 on both strands, and protects the DNA from cleavage by the ScrFI endonuclease. The polypeptide is Type II methyltransferase M2.ScrFI (scrFIBM) (Lactococcus lactis subsp. cremoris (Streptococcus cremoris)).